Here is a 394-residue protein sequence, read N- to C-terminus: Elongation factor Tu 2 (394 aa).

The 195-residue stretch at 10-204 (KPHVNVGTIG…ALDNYIPEPE (195 aa)) folds into the tr-type G domain. The interval 19–26 (GHVDHGKT) is G1. Residue 19 to 26 (GHVDHGKT) participates in GTP binding. Position 26 (Thr26) interacts with Mg(2+). Residues 60 to 64 (GITIS) are G2. Residues 81-84 (DCPG) form a G3 region. Residues 81–85 (DCPGH) and 136–139 (NKCD) each bind GTP. The tract at residues 136–139 (NKCD) is G4. Residues 174–176 (SAL) are G5.

This sequence belongs to the TRAFAC class translation factor GTPase superfamily. Classic translation factor GTPase family. EF-Tu/EF-1A subfamily. In terms of assembly, monomer.

It localises to the cytoplasm. The enzyme catalyses GTP + H2O = GDP + phosphate + H(+). Its function is as follows. GTP hydrolase that promotes the GTP-dependent binding of aminoacyl-tRNA to the A-site of ribosomes during protein biosynthesis. The sequence is that of Elongation factor Tu 2 from Photobacterium profundum (strain SS9).